Here is a 121-residue protein sequence, read N- to C-terminus: Large ribosomal subunit protein uL14 (121 aa).

This sequence belongs to the universal ribosomal protein uL14 family. Part of the 50S ribosomal subunit. Forms a cluster with proteins L3 and L19. In the 70S ribosome, L14 and L19 interact and together make contacts with the 16S rRNA in bridges B5 and B8.

Binds to 23S rRNA. Forms part of two intersubunit bridges in the 70S ribosome. This Aquifex pyrophilus protein is Large ribosomal subunit protein uL14.